The sequence spans 690 residues: UvrABC system protein B (690 aa).

Residues 39 to 422 enclose the Helicase ATP-binding domain; that stretch reads EGLDDGLSFQ…EQQHAGQVVE (384 aa). Position 52-59 (52-59) interacts with ATP; it reads GVTGSGKT. The Beta-hairpin motif lies at 105–128; sequence YYDYYQPEAYVPSRDLFIEKDSSI. In terms of domain architecture, Helicase C-terminal spans 443–596; that stretch reads QVDDLLAEIG…QIAFNLEHGI (154 aa). Residues 640–675 enclose the UVR domain; that stretch reads AREIKRLEKSMMECAKNLEFEKAAAARDDLFRLRER.

Belongs to the UvrB family. As to quaternary structure, forms a heterotetramer with UvrA during the search for lesions. Interacts with UvrC in an incision complex.

The protein resides in the cytoplasm. Its function is as follows. The UvrABC repair system catalyzes the recognition and processing of DNA lesions. A damage recognition complex composed of 2 UvrA and 2 UvrB subunits scans DNA for abnormalities. Upon binding of the UvrA(2)B(2) complex to a putative damaged site, the DNA wraps around one UvrB monomer. DNA wrap is dependent on ATP binding by UvrB and probably causes local melting of the DNA helix, facilitating insertion of UvrB beta-hairpin between the DNA strands. Then UvrB probes one DNA strand for the presence of a lesion. If a lesion is found the UvrA subunits dissociate and the UvrB-DNA preincision complex is formed. This complex is subsequently bound by UvrC and the second UvrB is released. If no lesion is found, the DNA wraps around the other UvrB subunit that will check the other stand for damage. The chain is UvrABC system protein B from Dechloromonas aromatica (strain RCB).